Here is a 172-residue protein sequence, read N- to C-terminus: Peptidyl-prolyl cis-trans isomerase (172 aa).

The PPIase cyclophilin-type domain occupies 7-170; it reads FFDMTVGGAP…KVVKVADCGQ (164 aa).

It belongs to the cyclophilin-type PPIase family.

It is found in the cytoplasm. The enzyme catalyses [protein]-peptidylproline (omega=180) = [protein]-peptidylproline (omega=0). Binds cyclosporin A (CsA). CsA mediates some of its effects via an inhibitory action on PPIase. Functionally, PPIases accelerate the folding of proteins. It catalyzes the cis-trans isomerization of proline imidic peptide bonds in oligopeptides. The sequence is that of Peptidyl-prolyl cis-trans isomerase (CYP) from Zea mays (Maize).